We begin with the raw amino-acid sequence, 164 residues long: Lipoprotein signal peptidase (164 aa).

3 helical membrane passes run Phe-12–Ala-32, Trp-70–Thr-90, and Gln-93–Phe-113. Catalysis depends on residues Asp-123 and Asp-141. The chain crosses the membrane as a helical span at residues Tyr-133 to Ile-153.

The protein belongs to the peptidase A8 family.

The protein localises to the cell inner membrane. The enzyme catalyses Release of signal peptides from bacterial membrane prolipoproteins. Hydrolyzes -Xaa-Yaa-Zaa-|-(S,diacylglyceryl)Cys-, in which Xaa is hydrophobic (preferably Leu), and Yaa (Ala or Ser) and Zaa (Gly or Ala) have small, neutral side chains.. The protein operates within protein modification; lipoprotein biosynthesis (signal peptide cleavage). Functionally, this protein specifically catalyzes the removal of signal peptides from prolipoproteins. The polypeptide is Lipoprotein signal peptidase (Pseudoalteromonas atlantica (strain T6c / ATCC BAA-1087)).